The following is a 71-amino-acid chain: Small ribosomal subunit protein bS18 (71 aa).

This sequence belongs to the bacterial ribosomal protein bS18 family. In terms of assembly, part of the 30S ribosomal subunit. Forms a tight heterodimer with protein bS6.

Its function is as follows. Binds as a heterodimer with protein bS6 to the central domain of the 16S rRNA, where it helps stabilize the platform of the 30S subunit. The protein is Small ribosomal subunit protein bS18 of Microcystis aeruginosa (strain NIES-843 / IAM M-2473).